The primary structure comprises 1581 residues: Calmodulin-regulated spectrin-associated protein 1 (1581 aa).

One can recognise a Calponin-homology (CH) domain in the interval 215 to 330; that stretch reads ESPAHQKVRY…FIAELFWWFE (116 aa). Phosphoserine is present on residues S216, S370, S374, and S415. Positions 351–399 are disordered; sequence VLQQKSSRPPVPISNATKRSFLGSPAAMSPADQPPSTQPLAEGSHRYHL. The tract at residues 424 to 470 is disordered; the sequence is RQKQQKVSQTEEIPDQRHRSNSLTRVDGQPRGAIGAWPDKKNRPVSQ. The residue at position 511 (T511) is a Phosphothreonine. Phosphoserine occurs at positions 550, 553, 560, 572, and 586. Positions 603–617 are enriched in basic and acidic residues; it reads KQITTKEDERGEGRP. The segment at 603–649 is disordered; that stretch reads KQITTKEDERGEGRPRTIMAKRPSEGSQPMVRKKVSGGHGSRDLNRT. 5 positions are modified to phosphoserine: S626, S718, S724, S734, and S736. Positions 765 to 785 are enriched in basic and acidic residues; that stretch reads ESAKLQEDMKVKEHEDKDDAS. Disordered stretches follow at residues 765 to 803 and 821 to 866; these read ESAK…SMSM and LNSC…SKDP. 2 stretches are compositionally biased toward low complexity: residues 792-803 and 826-837; these read LSTTSQLSSMSM and TKSSTSSSQKTT. Residues 853–865 show a composition bias toward basic and acidic residues; it reads QKREQSPGRHSKD. Positions 867 to 888 are sufficient for interaction with SPTBN1; the sequence is ASLLASELVQLHMQLEEKRRAI. Coiled coils occupy residues 869–905 and 1005–1037; these read LLAS…QRLK and DVNE…QEQL. The sufficient for interaction with calmodulin stretch occupies residues 899–918; the sequence is SARQRLKLGKAAFLHVVKKG. 4 disordered regions span residues 1064–1143, 1225–1251, 1288–1315, and 1332–1428; these read FVEP…ELPE, PDED…PGVG, QLEA…EEEK, and QALE…DWET. S1069 is subject to Phosphoserine. Residues 1092–1103 are compositionally biased toward basic and acidic residues; that stretch reads RPAELKVPKDRQ. Over residues 1104 to 1132 the composition is skewed to polar residues; sequence QGCSRSKTPTPSVETLPQSRSLPPSTHPR. The residue at position 1133 (S1133) is a Phosphoserine. Basic and acidic residues predominate over residues 1225–1237; sequence PDEDGEVVGHESS. The stretch at 1265–1336 forms a coiled coil; that stretch reads AKKRAAFLLK…RRKQQQALEE (72 aa). A compositionally biased stretch (basic residues) spans 1342 to 1353; that stretch reads PKSKPKKPRPKS. Polar residues predominate over residues 1361–1372; the sequence is SDSGTKCSSTHN. A compositionally biased stretch (low complexity) spans 1373-1390; that stretch reads LSQTHSGSSLSLASAATT. 2 positions are modified to phosphoserine: S1378 and S1407. In terms of domain architecture, CKK spans 1443 to 1576; that stretch reads GPKLFKEPSS…QPKRPTVPKK (134 aa). Residue Y1516 is modified to Phosphotyrosine.

The protein belongs to the CAMSAP1 family. As to quaternary structure, interacts with spectrin via SPTBN1; the interaction is direct. Interacts with calmodulin; calcium-dependent it prevents interaction with spectrin. In terms of tissue distribution, expressed in the central nervous system.

The protein resides in the cytoplasm. It is found in the cytoskeleton. Functionally, key microtubule-organizing protein that specifically binds the minus-end of non-centrosomal microtubules and regulates their dynamics and organization. Specifically recognizes growing microtubule minus-ends and stabilizes microtubules. Acts on free microtubule minus-ends that are not capped by microtubule-nucleating proteins or other factors and protects microtubule minus-ends from depolymerization. In contrast to CAMSAP2 and CAMSAP3, tracks along the growing tips of minus-end microtubules without significantly affecting the polymerization rate: binds at the very tip of the microtubules minus-end and acts as a minus-end tracking protein (-TIP) that dissociates from microtubules after allowing tubulin incorporation. Through interaction with spectrin may regulate neurite outgrowth. The chain is Calmodulin-regulated spectrin-associated protein 1 (Camsap1) from Mus musculus (Mouse).